The chain runs to 159 residues: CASP-like protein 1C1 (159 aa).

Topologically, residues 1 to 6 are cytoplasmic; it reads MAKIKR. A helical transmembrane segment spans residues 7 to 27; sequence IITTLVRLLVLGAALSATIVM. Residues 28 to 50 are Extracellular-facing; that stretch reads VTSHDSAEVLNLSFDAKYTNARA. An N-linked (GlcNAc...) asparagine glycan is attached at N38. A helical membrane pass occupies residues 51–73; the sequence is FVYFAITNAIASGYSFIALFLSF. Topologically, residues 74–86 are cytoplasmic; it reads STPLWHLVFLLDV. Residues 87–107 form a helical membrane-spanning segment; it reads FMTLLLTSSISVALAIADVGK. Topologically, residues 108-130 are extracellular; it reads KGNSHAGWLPVCGQVPEFCDHVT. The chain crosses the membrane as a helical span at residues 131–151; the sequence is GALIAGFSAAVLYLVLLLFSI. Topologically, residues 152–159 are cytoplasmic; sequence HAVLNPKP.

The protein belongs to the Casparian strip membrane proteins (CASP) family. Homodimer and heterodimers.

It localises to the cell membrane. The protein is CASP-like protein 1C1 of Vitis vinifera (Grape).